The primary structure comprises 215 residues: Large ribosomal subunit protein uL4 (215 aa).

A disordered region spans residues 46–76 (TAKSKNRAEVSGGGRKPWAQKGGGRARAGSI). Gly residues predominate over residues 56–71 (SGGGRKPWAQKGGGRA).

It belongs to the universal ribosomal protein uL4 family. Part of the 50S ribosomal subunit.

Functionally, one of the primary rRNA binding proteins, this protein initially binds near the 5'-end of the 23S rRNA. It is important during the early stages of 50S assembly. It makes multiple contacts with different domains of the 23S rRNA in the assembled 50S subunit and ribosome. Its function is as follows. Forms part of the polypeptide exit tunnel. This Helicobacter acinonychis (strain Sheeba) protein is Large ribosomal subunit protein uL4.